A 458-amino-acid chain; its full sequence is MSTKMTPPVEKNEFIDVVFEDLTHDGAGVAKVKGYPIFVKNGLPGEEAQIKIIKVKKNFAFGRLMKLHTESPYRKDAECPVYNQCGGCQLQHLTYEGQLQAKEKQVRDVMQRIGGLADVPVHPVLGMKNPWVYRNKAQVPIGEREGGLVAGFYRQGTHDIINMESCLIQAEENDTLIQEVKRICEKHGITAYNEERNKGTLRHVMARYGQVTGEIMLVFITRTAELPNKKAIIEEIAAKFPEVKSIVQNVNTKRTNVIFGDKTTVLYGSEYIYDFIGDIKFAISARSFYQVNPEQTKVLYDKTLEYAKLNGNETVIDAYCGIGSISLFLAQKAKKVYGVEIVPEAIEDANRNAALNNMTNAEFGVGEAEVVIPKWYKEGVIADTMVVDPPRKGCDEALLNTIIDMKPNRVVYVSCNPATLARDLKVLEEGGYKTQEVQPVDMFPHTTHVECVAWLKLV.

One can recognise a TRAM domain in the interval 8-66; the sequence is PVEKNEFIDVVFEDLTHDGAGVAKVKGYPIFVKNGLPGEEAQIKIIKVKKNFAFGRLMK. Residues cysteine 79, cysteine 85, cysteine 88, and cysteine 166 each contribute to the [4Fe-4S] cluster site. Positions 290, 319, 340, and 388 each coordinate S-adenosyl-L-methionine. Cysteine 415 functions as the Nucleophile in the catalytic mechanism.

It belongs to the class I-like SAM-binding methyltransferase superfamily. RNA M5U methyltransferase family.

This is an uncharacterized protein from Bacillus cereus (strain ATCC 14579 / DSM 31 / CCUG 7414 / JCM 2152 / NBRC 15305 / NCIMB 9373 / NCTC 2599 / NRRL B-3711).